Here is a 181-residue protein sequence, read N- to C-terminus: Large ribosomal subunit protein uL5 (181 aa).

The protein belongs to the universal ribosomal protein uL5 family. As to quaternary structure, part of the 50S ribosomal subunit; part of the 5S rRNA/L5/L18/L25 subcomplex. Contacts the 5S rRNA and the P site tRNA. Forms a bridge to the 30S subunit in the 70S ribosome.

This is one of the proteins that bind and probably mediate the attachment of the 5S RNA into the large ribosomal subunit, where it forms part of the central protuberance. In the 70S ribosome it contacts protein S13 of the 30S subunit (bridge B1b), connecting the 2 subunits; this bridge is implicated in subunit movement. Contacts the P site tRNA; the 5S rRNA and some of its associated proteins might help stabilize positioning of ribosome-bound tRNAs. In Campylobacter lari (strain RM2100 / D67 / ATCC BAA-1060), this protein is Large ribosomal subunit protein uL5.